The sequence spans 323 residues: Mycothiol acetyltransferase (323 aa).

N-acetyltransferase domains are found at residues 5–145 (LTTD…LPLR) and 168–323 (VEIR…PEER). E36 lines the 1D-myo-inositol 2-(L-cysteinylamino)-2-deoxy-alpha-D-glucopyranoside pocket. 83–85 (VAV) contacts acetyl-CoA. 1D-myo-inositol 2-(L-cysteinylamino)-2-deoxy-alpha-D-glucopyranoside contacts are provided by E195, K236, and E252. Acetyl-CoA contacts are provided by residues 256–258 (VGV) and 263–269 (QGSGLGR). Residue Y290 participates in 1D-myo-inositol 2-(L-cysteinylamino)-2-deoxy-alpha-D-glucopyranoside binding. Acetyl-CoA is bound at residue 295–300 (NRPAVQ).

It belongs to the acetyltransferase family. MshD subfamily. In terms of assembly, monomer.

The catalysed reaction is 1D-myo-inositol 2-(L-cysteinylamino)-2-deoxy-alpha-D-glucopyranoside + acetyl-CoA = mycothiol + CoA + H(+). Catalyzes the transfer of acetyl from acetyl-CoA to desacetylmycothiol (Cys-GlcN-Ins) to form mycothiol. The protein is Mycothiol acetyltransferase of Thermobifida fusca (strain YX).